The following is a 508-amino-acid chain: Catalase (508 aa).

Active-site residues include histidine 63 and asparagine 136. Tyrosine 346 is a binding site for heme.

The protein belongs to the catalase family. In terms of assembly, homohexamer. The cofactor is heme.

It localises to the cytoplasm. The enzyme catalyses 2 H2O2 = O2 + 2 H2O. Its function is as follows. Decomposes hydrogen peroxide into water and oxygen; serves to protect cells from the toxic effects of hydrogen peroxide. This is Catalase (katA) from Haemophilus influenzae (strain ATCC 51907 / DSM 11121 / KW20 / Rd).